The chain runs to 418 residues: MSRAKFERKKPHVNIGTIGHVDHGKTTLTAAITMTLAAAGGSVGKKYDEIDSAPEEKARGITINTAHVEYETEKRHYAHVDCPGHADYVKNMITGAAQMDGAILVVSGADGPMPQTKEHILLAKQVGVPNVVVFLNKEDQVDDKELLELVELEVRETLDKYEFPGDEIPVVPGSALLALEALIENPKTQRGENKWVDKIYQLMDNVDSYIPTPQRETDKPFLLAVEDVLSITGRGTVATGRVERGALRISDNVEIVGLRPTQTAVVTGLEMFKKTLDETLAGDNVGVLLRGVQKKDIERGMVIAKPGTITPHTKFEAQVYVLTKEEGGRHSAFMIGYQPQFYVRTTDVTGKVVGFNHIQMRNPSSVAEEHSNKMAMPGDRISMTVELINPIAIEKGMRFAIREGGRTVGAGVVTNIVQ.

The tr-type G domain maps to 10 to 214 (KPHVNIGTIG…NVDSYIPTPQ (205 aa)). The G1 stretch occupies residues 19-26 (GHVDHGKT). A GTP-binding site is contributed by 19-26 (GHVDHGKT). Thr-26 lines the Mg(2+) pocket. Residues 60 to 64 (GITIN) form a G2 region. A G3 region spans residues 81–84 (DCPG). Residues 81–85 (DCPGH) and 136–139 (NKED) contribute to the GTP site. Residues 136–139 (NKED) form a G4 region. Positions 174–176 (SAL) are G5.

This sequence belongs to the TRAFAC class translation factor GTPase superfamily. Classic translation factor GTPase family. EF-Tu/EF-1A subfamily.

It localises to the plastid. Its subcellular location is the chloroplast. The catalysed reaction is GTP + H2O = GDP + phosphate + H(+). Functionally, GTP hydrolase that promotes the GTP-dependent binding of aminoacyl-tRNA to the A-site of ribosomes during protein biosynthesis. This is Elongation factor Tu, chloroplastic (tufA) from Chlamydomonas reinhardtii (Chlamydomonas smithii).